The sequence spans 392 residues: MIISASTDYRHAAKRRLPPFLFHYADGGAYAEHTLRRNVEDLAGIALRQRVLKDMSHLSLETELFGEPLAMPVALAPVGLAGMYARRGEVQAARAAASKGIPFTLSTVSVCPIAEVASAIERPLWFQLYVLRDRGFMKHVLERAKAAGVKTLVFTVDMPVPGARYRDAHSGMSGKHGGLRRMLQAVTHPSWAWDVGLHGRPHDLGNVSDYRGQPTELEDYIAWLGNNFDPSISWKDLEWIREFWDGPMIIKGILDPEDARDAVRFGADGIVVSNHGGRQLDGVPSTARALPAIADAVKGDLAILADSGVRNGLDVVRMIAMGADTILLGRAYIYALATAGEAGVAHLLELFEKEMRVAMTLTGARSIAELGSDSLVTGSAAASIERTLSPSL.

An FMN hydroxy acid dehydrogenase domain is found at 1–380 (MIISASTDYR…GSDSLVTGSA (380 aa)). Position 24 (Tyr-24) interacts with substrate. FMN is bound by residues Ser-106 and Gln-127. Position 129 (Tyr-129) interacts with substrate. Residue Thr-155 coordinates FMN. Arg-164 is a substrate binding site. Lys-251 is a binding site for FMN. His-275 functions as the Proton acceptor in the catalytic mechanism. Arg-278 serves as a coordination point for substrate. 306–330 (DSGVRNGLDVVRMIAMGADTILLGR) is an FMN binding site.

This sequence belongs to the FMN-dependent alpha-hydroxy acid dehydrogenase family. FMN is required as a cofactor.

The protein resides in the cell inner membrane. The catalysed reaction is (S)-lactate + A = pyruvate + AH2. Its function is as follows. Catalyzes the conversion of L-lactate to pyruvate. Is coupled to the respiratory chain. The polypeptide is L-lactate dehydrogenase (Chromohalobacter salexigens (strain ATCC BAA-138 / DSM 3043 / CIP 106854 / NCIMB 13768 / 1H11)).